A 339-amino-acid polypeptide reads, in one-letter code: Ribonucleoside-diphosphate reductase subunit beta (339 aa).

Fe cation contacts are provided by Asp-87 and His-121. Tyr-125 is an active-site residue. His-215 is a binding site for Fe cation.

Belongs to the ribonucleoside diphosphate reductase small chain family. As to quaternary structure, tetramer of two alpha and two beta subunits. The cofactor is Fe cation.

It carries out the reaction a 2'-deoxyribonucleoside 5'-diphosphate + [thioredoxin]-disulfide + H2O = a ribonucleoside 5'-diphosphate + [thioredoxin]-dithiol. Its function is as follows. Provides the precursors necessary for DNA synthesis. Catalyzes the biosynthesis of deoxyribonucleotides from the corresponding ribonucleotides. This Mycoplasmoides gallisepticum (strain R(low / passage 15 / clone 2)) (Mycoplasma gallisepticum) protein is Ribonucleoside-diphosphate reductase subunit beta (nrdF).